Consider the following 81-residue polypeptide: MNPLISAASVIAAGLAVGLASIGPGVGQGTAAGQAVEGIARQPEAEGKIRGTLLLSLAFMEALTIYGLVVALALPFANPFV.

Helical transmembrane passes span 3–23 (PLIS…ASIG) and 53–73 (LLLS…VALA).

This sequence belongs to the ATPase C chain family. F-type ATPases have 2 components, F(1) - the catalytic core - and F(0) - the membrane proton channel. F(1) has five subunits: alpha(3), beta(3), gamma(1), delta(1), epsilon(1). F(0) has four main subunits: a(1), b(1), b'(1) and c(10-14). The alpha and beta chains form an alternating ring which encloses part of the gamma chain. F(1) is attached to F(0) by a central stalk formed by the gamma and epsilon chains, while a peripheral stalk is formed by the delta, b and b' chains.

Its subcellular location is the plastid. It is found in the chloroplast thylakoid membrane. Its function is as follows. F(1)F(0) ATP synthase produces ATP from ADP in the presence of a proton or sodium gradient. F-type ATPases consist of two structural domains, F(1) containing the extramembraneous catalytic core and F(0) containing the membrane proton channel, linked together by a central stalk and a peripheral stalk. During catalysis, ATP synthesis in the catalytic domain of F(1) is coupled via a rotary mechanism of the central stalk subunits to proton translocation. Functionally, key component of the F(0) channel; it plays a direct role in translocation across the membrane. A homomeric c-ring of between 10-14 subunits forms the central stalk rotor element with the F(1) delta and epsilon subunits. The chain is ATP synthase subunit c, chloroplastic from Huperzia lucidula (Shining clubmoss).